The sequence spans 32 residues: Fimbrin sef21 (32 aa).

Its subcellular location is the fimbrium. The sequence is that of Fimbrin sef21 from Salmonella enteritidis.